The primary structure comprises 879 residues: Leucine--tRNA ligase (879 aa).

The short motif at 45-55 is the 'HIGH' region element; the sequence is PYPSGALHMGH. The 'KMSKS' region signature appears at 637 to 641; that stretch reads KMSKS. K640 is a binding site for ATP.

It belongs to the class-I aminoacyl-tRNA synthetase family.

The protein resides in the cytoplasm. The catalysed reaction is tRNA(Leu) + L-leucine + ATP = L-leucyl-tRNA(Leu) + AMP + diphosphate. The polypeptide is Leucine--tRNA ligase (Xylella fastidiosa (strain M12)).